The chain runs to 209 residues: Mitochondrial import inner membrane translocase subunit Tim23 (209 aa).

The next 3 membrane-spanning stretches (helical) occupy residues 73-93, 125-145, and 180-200; these read FELA…FGAV, ALWA…GVII, and GGLA…WEHI.

Belongs to the Tim17/Tim22/Tim23 family. As to quaternary structure, component of the TIM23 complex at least composed of timm23, timm17 and timm50. The complex interacts with the timm44 component of the PAM complex.

The protein resides in the mitochondrion inner membrane. In terms of biological role, essential component of the TIM23 complex, a complex that mediates the translocation of transit peptide-containing proteins across the mitochondrial inner membrane. The chain is Mitochondrial import inner membrane translocase subunit Tim23 (timm23) from Xenopus tropicalis (Western clawed frog).